Consider the following 539-residue polypeptide: Chaperonin GroEL (539 aa).

Residues 29-32 (TIGP), 86-90 (DGTTT), G414, and D493 contribute to the ATP site.

Belongs to the chaperonin (HSP60) family. As to quaternary structure, forms a cylinder of 14 subunits composed of two heptameric rings stacked back-to-back. Interacts with the co-chaperonin GroES.

It localises to the cytoplasm. It catalyses the reaction ATP + H2O + a folded polypeptide = ADP + phosphate + an unfolded polypeptide.. Together with its co-chaperonin GroES, plays an essential role in assisting protein folding. The GroEL-GroES system forms a nano-cage that allows encapsulation of the non-native substrate proteins and provides a physical environment optimized to promote and accelerate protein folding. This chain is Chaperonin GroEL, found in Staphylococcus aureus.